Reading from the N-terminus, the 353-residue chain is 41 kDa protein (353 aa).

A disordered region spans residues 132–197 (QSSHASALEQ…DNNSSDTIKD (66 aa)). A compositionally biased stretch (basic and acidic residues) spans 157 to 169 (LDNKGKSDSENCN).

This Lactobacillus helveticus (Lactobacillus suntoryeus) protein is 41 kDa protein.